Consider the following 114-residue polypeptide: Adapter SH3BGRL (114 aa).

Residues 13–50 (STAIKKKQQDVLGFLEANKIGFEEKDIAANEENRKWMR) form a required for interaction with HER2 region. Residues 54–71 (PENSRPATGYPLPPQIFN) are required for interaction with PFN1, HER2, and ATG12. The SH3-binding motif lies at 61–67 (TGYPLPP).

The protein belongs to the SH3BGR family. In terms of assembly, monomer. Interacts with PFN1/Profilin-1. Interacts with ERBB2. Interacts with ATG12. Interacts with BECN1. Interacts with translating ribosomes. Ubiquitous.

The protein localises to the cytoplasm. It is found in the cytosol. Its subcellular location is the cell membrane. Appears to function as an adapter protein that bridges proteins together or proteins with mRNAs. May function as a ubiquitin ligase-substrate adapter. Additionally, associates with translating cytoplasmic ribosomes and may promote the expression of specific mRNAs. This Homo sapiens (Human) protein is Adapter SH3BGRL.